The primary structure comprises 1034 residues: Platelet endothelial aggregation receptor 1 (1034 aa).

Positions 1-18 (MPLCPLLLLALGLRLTGT) are cleaved as a signal peptide. Topologically, residues 19 to 754 (LNSNDPNVCT…PTSPVTHNSL (736 aa)) are extracellular. The 79-residue stretch at 23–101 (DPNVCTFWES…YYESRGACVP (79 aa)) folds into the EMI domain. Intrachain disulfides connect C27–C89, C53–C63, and C88–C99. N150 is a glycosylation site (N-linked (GlcNAc...) asparagine). 5 consecutive EGF-like domains span residues 181-215 (YGPA…PSCN), 223-258 (DGFF…VICS), 266-301 (HGPN…DRCQ), 309-344 (FGQD…DRCT), and 398-433 (HGPG…PHCA). 5 disulfides stabilise this stretch: C185–C196, C189–C203, C205–C214, C233–C246, and C248–C257. An N-linked (GlcNAc...) asparagine glycan is attached at N269. Disulfide bonds link C270–C282, C276–C289, C291–C300, C313–C325, C319–C332, C334–C343, C402–C414, C408–C421, and C423–C432. N-linked (GlcNAc...) asparagine glycosylation is present at N474. EGF-like domains follow at residues 484–519 (WGFN…AHCQ), 575–605 (SNTC…PSCQ), 613–648 (YGKR…PDCS), and 656–691 (WGLK…PNCL). Intrachain disulfides connect C488-C500, C494-C507, C509-C518, C578-C586, C580-C593, C595-C604, C617-C629, C622-C636, C638-C647, C660-C672, C666-C679, and C681-C690. A helical transmembrane segment spans residues 755 to 775 (GAVIGIAVLGTLVVALIALFI). Residues 776-1034 (GYRQWQKGKE…PSPPSRRQDR (259 aa)) are Cytoplasmic-facing. Residues 823-883 (TLSQCSPNPP…PHERGASHLD (61 aa)) are disordered. The segment covering 851 to 883 (RPSRAHGRENHVTLPADWKHRREPHERGASHLD) has biased composition (basic and acidic residues). Phosphotyrosine is present on Y923. A disordered region spans residues 925-1034 (TIRDLPSLPG…PSPPSRRQDR (110 aa)). Phosphoserine is present on S951. Positions 972–991 (DSGTYEQPSPLSHNEESLGS) are enriched in polar residues. Residue S1026 is modified to Phosphoserine.

The protein belongs to the MEGF family. As to quaternary structure, interacts with SHC2 upon its aggregation-induced tyrosine phosphorylation. Interacts (via extracellular domain) with SVEP1. Phosphorylated in the intracellular domain on tyrosine residues. Phosphorylated on tyrosine residues by SRC. Tyrosine phosphorylation is detected upon platelet aggregation stimulated by collagen, TRAP and thrombin and platelet-platelet contacts but not after platelet activation. Tyrosine phosphorylation enhanced its association with SHC1 and SHC2. Phosphorylated in the intracellular domain on tyrosine residues. Phosphorylated when in the presence of SVEP1. In terms of tissue distribution, expressed in thymocytes, bone marrow stromal and osteogenic cells (at protein level). Strongly expressed in kidney and heart. Moderately expressed in lung, spleen, thymus, liver, brain, testis, skin and stomach. Expressed in hematopoietic stem progenitor cells.

Its subcellular location is the cell membrane. It localises to the cell projection. The protein resides in the lamellipodium. Its function is as follows. Required for SVEP1-mediated platelet activation, via its interaction with SVEP1 and subsequent activation of AKT/mTOR signaling. May be involved in the early stages of hematopoiesis. In Mus musculus (Mouse), this protein is Platelet endothelial aggregation receptor 1 (Pear1).